The following is a 178-amino-acid chain: Inorganic pyrophosphatase (178 aa).

Substrate-binding residues include Lys30, Arg44, and Tyr56. Positions 66, 71, and 103 each coordinate Mg(2+). Tyr140 contributes to the substrate binding site.

This sequence belongs to the PPase family. In terms of assembly, homohexamer. Mg(2+) is required as a cofactor.

It is found in the cytoplasm. It catalyses the reaction diphosphate + H2O = 2 phosphate + H(+). Functionally, catalyzes the hydrolysis of inorganic pyrophosphate (PPi) forming two phosphate ions. In Pyrococcus abyssi (strain GE5 / Orsay), this protein is Inorganic pyrophosphatase.